The chain runs to 477 residues: Epoxyalcohol synthase CYP5164B1 (477 aa).

Cys-421 provides a ligand contact to heme.

This sequence belongs to the cytochrome P450 family. The cofactor is heme.

The enzyme catalyses (9S)-hydroperoxy-(10E,12Z)-octadecadienoate = (11S)-hydroxy-(9S,10S)-epoxy-(12Z)-octadecenoate. It catalyses the reaction (13S)-hydroperoxy-(9Z,11E)-octadecadienoate = 11-hydroxy-12,13-epoxy-(9Z)-octadecenoate. Its pathway is lipid metabolism; oxylipin biosynthesis. Its function is as follows. Cytochrome P450 epoxyalcohol synthase involved in the metabolism of oxylipins 'ectocarpins' natural products, such as hybridalactone, ecklonilactones and derivatives. Isomerizes the hydroperoxides into epoxyalcohols via epoxyallylic radical. Can use linoleic acid 9-hydroperoxide ((9S,10E,12Z)-9-hydroperoxy-10,12-octadecadienoic, 9-HPOD) as preferred substrate to produce (9S,10S,11S,12Z)-9,10-epoxy-11-hydroxy-12-octadecenoic acid and, to a lower extent, active with linoleate 13-hydroperoxide ((9Z,11E,13S)-13-hydroperoxy-9,11-octadecadienoic, 13-HPOD) to produce 11-hydroxy-12,13-epoxy-9-octadecenoic acid. No activity toward alpha-linolenic acid 9- and 13-hydroperoxides, and toward eicosapentaenoic acid 15-hydroperoxide. The sequence is that of Epoxyalcohol synthase CYP5164B1 from Ectocarpus siliculosus (Brown alga).